The following is a 240-amino-acid chain: Urease accessory protein UreD (240 aa).

The protein belongs to the UreD family. As to quaternary structure, ureD, UreF and UreG form a complex that acts as a GTP-hydrolysis-dependent molecular chaperone, activating the urease apoprotein by helping to assemble the nickel containing metallocenter of UreC. The UreE protein probably delivers the nickel.

Its subcellular location is the cytoplasm. Its function is as follows. Required for maturation of urease via the functional incorporation of the urease nickel metallocenter. This chain is Urease accessory protein UreD, found in Granulibacter bethesdensis (strain ATCC BAA-1260 / CGDNIH1).